We begin with the raw amino-acid sequence, 144 residues long: 6,7-dimethyl-8-ribityllumazine synthase (144 aa).

5-amino-6-(D-ribitylamino)uracil is bound by residues Phe21, Ala56–Glu58, and Ala80–Ile82. Gly85–Thr86 contributes to the (2S)-2-hydroxy-3-oxobutyl phosphate binding site. His88 functions as the Proton donor in the catalytic mechanism. Phe113 provides a ligand contact to 5-amino-6-(D-ribitylamino)uracil. Arg127 provides a ligand contact to (2S)-2-hydroxy-3-oxobutyl phosphate.

It belongs to the DMRL synthase family. As to quaternary structure, forms an icosahedral capsid composed of 60 subunits, arranged as a dodecamer of pentamers.

The enzyme catalyses (2S)-2-hydroxy-3-oxobutyl phosphate + 5-amino-6-(D-ribitylamino)uracil = 6,7-dimethyl-8-(1-D-ribityl)lumazine + phosphate + 2 H2O + H(+). The protein operates within cofactor biosynthesis; riboflavin biosynthesis; riboflavin from 2-hydroxy-3-oxobutyl phosphate and 5-amino-6-(D-ribitylamino)uracil: step 1/2. Its function is as follows. Catalyzes the formation of 6,7-dimethyl-8-ribityllumazine by condensation of 5-amino-6-(D-ribitylamino)uracil with 3,4-dihydroxy-2-butanone 4-phosphate. This is the penultimate step in the biosynthesis of riboflavin. This chain is 6,7-dimethyl-8-ribityllumazine synthase (ribH), found in Photobacterium leiognathi.